The sequence spans 332 residues: uncharacterized protein (332 aa).

The protein belongs to the bacterial solute-binding protein 1 family. WtpA subfamily.

This is an uncharacterized protein from Methanococcus maripaludis (strain DSM 14266 / JCM 13030 / NBRC 101832 / S2 / LL).